The following is a 116-amino-acid chain: Phage-like element PBSX protein XkdD (116 aa).

This is Phage-like element PBSX protein XkdD (xkdD) from Bacillus subtilis (strain 168).